Reading from the N-terminus, the 485-residue chain is MSLQDPTKEHNNTSPSPKDEKTDYVVDWDGAEDAANPRNWTTRTKTAHVLCVSGFTLYSNLAAVMFAPGAPLLVADFHITSTIVASLTVSIYILGFVFGPFLLASLSELYGRLWLYHICNLIYLAFTVGCALSTNTAMFLAFRFICGCAASGPMTIGGGTIADLYEAEERGKAMALFGLGPLLGPVIGPVVGGFVTEHLNWRWTFYLVLILAAIIAIAGAVIMRETFEPVLLERKAADERVRTGNRQLRARTSDGTRTANQLLLRAIIRPLKMLCVSPIVLSLSVYCAFLFGLTYLLFTTFPAVFGLTYQFSTEQEGLAFLGLGVGMIFGIALFAILSDKLLHQPRGGTLARPELRLVLMVWSSPLVPIGFFWYGWSAQSTTHWIVPIIGTAVIGIGAFLILMPAQLYLVDAFGTEGAASALAVNTGLRSLFGAVLPLAGPPLYSKLDLGWGNSVLAFIGLAFVPVPFVLYKYGETLRKRFPIDR.

The tract at residues 1–22 (MSLQDPTKEHNNTSPSPKDEKT) is disordered. The next 12 membrane-spanning stretches (helical) occupy residues 55–75 (FTLY…LLVA), 83–103 (IVAS…PFLL), 113–133 (LWLY…CALS), 144–164 (FICG…IADL), 175–195 (ALFG…GGFV), 203–223 (WTFY…AVIM), 278–298 (PIVL…YLLF), 317–337 (GLAF…FAIL), 357–377 (LVLM…YGWS), 384–404 (WIVP…ILMP), 421–441 (ALAV…LAGP), and 449–469 (LGWG…VPFV).

The protein belongs to the major facilitator superfamily.

Its subcellular location is the cell membrane. In terms of biological role, MFS-type transporter; part of the gene cluster that mediates the biosynthesis of the trans-fused decalin-containing tetramic acid phomasetin. In Pyrenochaetopsis sp, this protein is MFS-type transporter phm3.